The primary structure comprises 145 residues: Large ribosomal subunit protein uL15 (145 aa).

Positions 1–13 are enriched in basic residues; sequence MIRSKRKINKLRG. The disordered stretch occupies residues 1-44; the sequence is MIRSKRKINKLRGSRSNGGGCTKKRRGAGNKGGRGNAGASKQHW.

This sequence belongs to the universal ribosomal protein uL15 family. In terms of assembly, part of the 50S ribosomal subunit.

In terms of biological role, binds to the 23S rRNA. The chain is Large ribosomal subunit protein uL15 from Methanobrevibacter smithii (strain ATCC 35061 / DSM 861 / OCM 144 / PS).